Here is a 261-residue protein sequence, read N- to C-terminus: Carnitinyl-CoA dehydratase (261 aa).

The Nucleophile role is filled by Glu111. Catalysis depends on Glu131, which acts as the Proton acceptor.

The protein belongs to the enoyl-CoA hydratase/isomerase family.

The catalysed reaction is (R)-carnitinyl-CoA = crotonobetainyl-CoA + H2O. The protein operates within amine and polyamine metabolism; carnitine metabolism. Catalyzes the reversible dehydration of L-carnitinyl-CoA to crotonobetainyl-CoA. In Escherichia coli (strain ATCC 8739 / DSM 1576 / NBRC 3972 / NCIMB 8545 / WDCM 00012 / Crooks), this protein is Carnitinyl-CoA dehydratase.